A 345-amino-acid polypeptide reads, in one-letter code: Biotin synthase (345 aa).

The Radical SAM core domain occupies 49 to 276 (NQVQMSTLLS…ASFVRLSAGR (228 aa)). The [4Fe-4S] cluster site is built by Cys64, Cys68, and Cys71. Residues Cys108, Cys139, Cys199, and Arg271 each contribute to the [2Fe-2S] cluster site.

Belongs to the radical SAM superfamily. Biotin synthase family. As to quaternary structure, homodimer. Requires [4Fe-4S] cluster as cofactor. [2Fe-2S] cluster is required as a cofactor.

The catalysed reaction is (4R,5S)-dethiobiotin + (sulfur carrier)-SH + 2 reduced [2Fe-2S]-[ferredoxin] + 2 S-adenosyl-L-methionine = (sulfur carrier)-H + biotin + 2 5'-deoxyadenosine + 2 L-methionine + 2 oxidized [2Fe-2S]-[ferredoxin]. It participates in cofactor biosynthesis; biotin biosynthesis; biotin from 7,8-diaminononanoate: step 2/2. In terms of biological role, catalyzes the conversion of dethiobiotin (DTB) to biotin by the insertion of a sulfur atom into dethiobiotin via a radical-based mechanism. In Nitrosococcus oceani (strain ATCC 19707 / BCRC 17464 / JCM 30415 / NCIMB 11848 / C-107), this protein is Biotin synthase.